Consider the following 398-residue polypeptide: Alpha-2,8-sialyltransferase 8F (398 aa).

Over 1-3 the chain is Cytoplasmic; it reads MRS. Residues 4–24 traverse the membrane as a helical; Signal-anchor for type II membrane protein segment; that stretch reads GGTLFALIGSLMLLLLLRMLW. Residues 25 to 398 lie on the Lumenal side of the membrane; that stretch reads CPADAPARSR…KLQFSKCETA (374 aa). N-linked (GlcNAc...) asparagine glycans are attached at residues Asn66, Asn93, Asn151, and Asn196. Cystine bridges form between Cys186-Cys335 and Cys200-Cys395. Substrate-binding positions include Asn214, 236 to 238, and 322 to 324; these read NPS and STG. Residue His370 is the Proton donor/acceptor of the active site.

The protein belongs to the glycosyltransferase 29 family. In terms of tissue distribution, highly expressed in kidney and expressed and all tissues tested.

It is found in the golgi apparatus membrane. The catalysed reaction is a ganglioside GM3 + CMP-N-acetyl-beta-neuraminate = a ganglioside GD3 + CMP + H(+). The enzyme catalyses a ganglioside GM3 (d18:1(4E)) + CMP-N-acetyl-beta-neuraminate = a ganglioside GD3 (d18:1(4E)) + CMP + H(+). It catalyses the reaction a ganglioside GD1a (d18:1(4E)) + CMP-N-acetyl-beta-neuraminate = a ganglioside GT1a (d18:1(4E)) + CMP + H(+). It carries out the reaction a ganglioside GD1a + CMP-N-acetyl-beta-neuraminate = a ganglioside GT1a + CMP + H(+). The catalysed reaction is a ganglioside GM1b (d18:1(4E)) + CMP-N-acetyl-beta-neuraminate = a ganglioside GD1c (d18:1(4E)) + CMP + H(+). The enzyme catalyses a ganglioside GM1b + CMP-N-acetyl-beta-neuraminate = a ganglioside GD1c + CMP + H(+). It catalyses the reaction a ganglioside GM4 (d18:1(4E)) + CMP-N-acetyl-beta-neuraminate = an N-acetyl-alpha-neuraminosyl-(2-&gt;8)-N-acetyl-alpha-neuraminosyl-(2-&gt;3)-beta-D-galactosyl-(1&lt;-&gt;1')-N-acylsphing-4-enine + CMP + H(+). It carries out the reaction N-acetyl-alpha-neuraminosyl-(2-&gt;3)-beta-D-galactosyl-(1&lt;-&gt;1')-ceramide + CMP-N-acetyl-beta-neuraminate = N-acetyl-alpha-neuraminosyl-(2-&gt;8)-N-acetyl-alpha-neuraminosyl-(2-&gt;3)-beta-D-galactosyl-(1&lt;-&gt;1')-ceramide + CMP + H(+). The catalysed reaction is a ganglioside GT1b (d18:1(4E)) + CMP-N-acetyl-beta-neuraminate = a ganglioside GQ1b (d18:1(4E)) + CMP + H(+). The enzyme catalyses a ganglioside GT1b + CMP-N-acetyl-beta-neuraminate = a ganglioside GQ1b + CMP + H(+). It functions in the pathway protein modification; protein glycosylation. Functionally, alpha-2,8-sialyltransferase that prefers O-glycans to N-glycans or glycolipids as acceptor substrates. The minimal acceptor substrate is the NeuAc-alpha-2,3(6)-Gal sequence at the non-reducing end of their carbohydrate groups. This chain is Alpha-2,8-sialyltransferase 8F, found in Mus musculus (Mouse).